The sequence spans 418 residues: MYQSPRGTEDILPEDQPYWHFVRQQAARIAALYGYQRTDTPVFEDAGLFVRSVGEGTDIVSKEMYTFEDRGGDKLTLRPEGTAPVCRAYLEHGMQTRTKPVKLYYLSSIFRYDRPQAGRYRQHHQFGFEAIGEADASLDAEIIEMAWSFYNLLGITDLSLELNSIGCRQCRPNYISALKDYYQQHAGKLCPDCNTRLDKNTLRLLDCKRAECQAVAGNAPRSADYLCPDCLAHYSRLKECLTILDLPFHENFRLVRGLDYYSRTVFEIQPMAEGAQSTIGGGGRYDGLIEQLGGEATPAMGFATGIERIILNLKRQGIVPSPLPSPAVFLAYMGETASLASFALASDLRKAGIGIYQTYAQKSIKAQLRQANSLGVDWVVILGEEELKQGCAVLRNMKEAGQANIPLDQLICEIKKQI.

It belongs to the class-II aminoacyl-tRNA synthetase family. As to quaternary structure, homodimer.

It localises to the cytoplasm. The enzyme catalyses tRNA(His) + L-histidine + ATP = L-histidyl-tRNA(His) + AMP + diphosphate + H(+). The polypeptide is Histidine--tRNA ligase (Dehalococcoides mccartyi (strain ATCC BAA-2100 / JCM 16839 / KCTC 5957 / BAV1)).